Consider the following 622-residue polypeptide: Protein lev-9 (622 aa).

Residues 1-16 form the signal peptide; the sequence is MRFLLLLAISITYASA. The WAP; atypical domain occupies 17–61; sequence LSCPEVTLSQRPKHCKKECIADEDCKRNKRCMCDGECGLSCVNPI. 19 cysteine pairs are disulfide-bonded: C19–C49, C35–C47, C41–C57, C64–C105, C91–C118, C124–C171, C154–C188, C193–C233, C219–C246, C251–C291, C277–C304, C309–C349, C335–C362, C366–C409, C395–C420, C425–C467, C452–C481, C486–C543, and C529–C556. 8 Sushi domains span residues 62–120, 122–190, 191–248, 249–306, 307–364, 365–422, 423–483, and 484–558; these read AMCH…VCRL, LKCG…RCKA, RACP…NCKA, TECS…RCEE, IRCS…RCLA, SCRV…VCSP, LSCH…KCLP, and SWCE…KCVS. N411 carries an N-linked (GlcNAc...) asparagine glycan. Residues 576–622 constitute a propeptide that is removed on maturation; the sequence is SLPGRAVREYVDDELSTHRQHSGKCGIVSGKLERMIMQHSDNGVSVC.

Proteolytic processing of the C-terminus is required for clustering activity but not for secretion nor traffic.

The protein localises to the synapse. Its subcellular location is the secreted. Scaffolding protein that is necessary to cluster acetylcholine receptors at neuromuscular junctions. This Caenorhabditis elegans protein is Protein lev-9 (lev-9).